A 465-amino-acid chain; its full sequence is Midnolin (465 aa).

Positions 32 to 106 (MSLAIHSTTG…LTLVPTVEAG (75 aa)) constitute a Ubiquitin-like domain. 2 disordered regions span residues 185–262 (SVAT…SRKP) and 400–445 (RLRR…GLDF). Composition is skewed to low complexity over residues 195–219 (RPVSSAARVPPVSSSPSSPVSPSPV) and 240–257 (SPPASSSSTSTPGSSPTP). The segment at 397 to 424 (QQKRLRRKARRDARGPYHWTPSRKAGRS) is required for nucleolar localization.

Interacts with GCK; the interaction occurs preferentially at low glucose levels. Interacts with the proteasome. In terms of tissue distribution, expressed at high levels in brain and liver with significantly lower levels in muscle.

The protein localises to the nucleus. It is found in the cytoplasm. The protein resides in the cytosol. It localises to the nucleolus. Facilitates the ubiquitin-independent proteasomal degradation of stimulus-induced transcription factors such as FOSB, EGR1, NR4A1, and IRF4 to the proteasome for degradation. Promotes also the degradation of other substrates such as CBX4. Plays a role in inhibiting the activity of glucokinase GCK and both glucose-induced and basal insulin secretion. The polypeptide is Midnolin (Midn) (Mus musculus (Mouse)).